Consider the following 105-residue polypeptide: DNA-directed RNA polymerase subunit omega (105 aa).

This sequence belongs to the RNA polymerase subunit omega family. As to quaternary structure, the RNAP catalytic core consists of 2 alpha, 1 beta, 1 beta' and 1 omega subunit. When a sigma factor is associated with the core the holoenzyme is formed, which can initiate transcription.

The enzyme catalyses RNA(n) + a ribonucleoside 5'-triphosphate = RNA(n+1) + diphosphate. Functionally, promotes RNA polymerase assembly. Latches the N- and C-terminal regions of the beta' subunit thereby facilitating its interaction with the beta and alpha subunits. The sequence is that of DNA-directed RNA polymerase subunit omega from Streptococcus mutans serotype c (strain ATCC 700610 / UA159).